The primary structure comprises 172 residues: NADH-quinone oxidoreductase subunit B (172 aa).

[4Fe-4S] cluster is bound by residues Cys-46, Cys-47, Cys-111, and Cys-141.

It belongs to the complex I 20 kDa subunit family. As to quaternary structure, NDH-1 is composed of 14 different subunits. Subunits NuoB, C, D, E, F, and G constitute the peripheral sector of the complex. It depends on [4Fe-4S] cluster as a cofactor.

The protein localises to the cell membrane. The catalysed reaction is a quinone + NADH + 5 H(+)(in) = a quinol + NAD(+) + 4 H(+)(out). Its function is as follows. NDH-1 shuttles electrons from NADH, via FMN and iron-sulfur (Fe-S) centers, to quinones in the respiratory chain. The immediate electron acceptor for the enzyme in this species is believed to be a menaquinone. Couples the redox reaction to proton translocation (for every two electrons transferred, four hydrogen ions are translocated across the cytoplasmic membrane), and thus conserves the redox energy in a proton gradient. This is NADH-quinone oxidoreductase subunit B from Brevibacillus brevis (strain 47 / JCM 6285 / NBRC 100599).